The chain runs to 1363 residues: Insulin-like peptide receptor (1363 aa).

The signal sequence occupies residues 1–29; the sequence is MRVVDKMAGLMWAALTLVIGLGLLVPSNG. 16 N-linked (GlcNAc...) asparagine glycosylation sites follow: Asn-51, Asn-97, Asn-137, Asn-278, Asn-483, Asn-599, Asn-617, Asn-665, Asn-666, Asn-711, Asn-732, Asn-736, Asn-743, Asn-816, Asn-885, and Asn-898. Fibronectin type-III domains are found at residues 473 to 586 and 590 to 680; these read SFSR…TDAD and HPQD…CPKS. 2 Fibronectin type-III domains span residues 712–804 and 813–912; these read ETRA…LART and IPGN…VEEE. The Extracellular segment spans residues 721 to 928; the sequence is ELPVTARPFY…QDPQQQVPVS (208 aa). The disordered stretch occupies residues 739 to 759; the sequence is LPSTNRTVPPTPTPNPNPQLE. A helical membrane pass occupies residues 929-949; it reads LMIGMGVGFSLLLILAVIFGI. Over 950–1363 the chain is Cytoplasmic; it reads WYCTKKRFGD…NLRIPKSTLC (414 aa). Positions 994 to 1283 constitute a Protein kinase domain; that stretch reads ITLIRELGQG…EIVEILSPEL (290 aa). ATP contacts are provided by residues 1000 to 1008 and Lys-1028; that span reads LGQGSFGMV. Residues 1091–1117 form a disordered region; sequence PEEDVGLSDSPASNEAKNSPFAENDND. Asp-1148 serves as the catalytic Proton acceptor. The residue at position 1174 (Tyr-1174) is a Phosphotyrosine; by autocatalysis. Positions 1316–1363 are disordered; sequence DTETEMYPSGSEFSSTPSPPSETPYSHMNGSHPQNGSMNLRIPKSTLC. Residues 1322 to 1331 are compositionally biased toward low complexity; the sequence is YPSGSEFSST. Residues 1343 to 1353 show a composition bias toward polar residues; it reads MNGSHPQNGSM.

Belongs to the protein kinase superfamily. Tyr protein kinase family. Insulin receptor subfamily. As to quaternary structure, probable tetramer of 2 alpha and 2 beta chains linked by disulfide bonds. The alpha chains contribute to the formation of the ligand-binding domain, while the beta chains carry the kinase domain. Requires Mn(2+) as cofactor.

The protein resides in the membrane. The catalysed reaction is L-tyrosyl-[protein] + ATP = O-phospho-L-tyrosyl-[protein] + ADP + H(+). This receptor binds to the insulin related peptide and has a tyrosine-protein kinase activity. The sequence is that of Insulin-like peptide receptor from Branchiostoma lanceolatum (Common lancelet).